The chain runs to 338 residues: Glycerol-3-phosphate dehydrogenase [NAD(P)+] (338 aa).

S13, W14, and K108 together coordinate NADPH. The sn-glycerol 3-phosphate site is built by K108, G139, and S141. A143 is a binding site for NADPH. Residues K194, D247, S257, R258, and N259 each contribute to the sn-glycerol 3-phosphate site. K194 acts as the Proton acceptor in catalysis. R258 serves as a coordination point for NADPH. The NADPH site is built by V282 and E284.

This sequence belongs to the NAD-dependent glycerol-3-phosphate dehydrogenase family.

The protein resides in the cytoplasm. It catalyses the reaction sn-glycerol 3-phosphate + NAD(+) = dihydroxyacetone phosphate + NADH + H(+). The catalysed reaction is sn-glycerol 3-phosphate + NADP(+) = dihydroxyacetone phosphate + NADPH + H(+). The protein operates within membrane lipid metabolism; glycerophospholipid metabolism. In terms of biological role, catalyzes the reduction of the glycolytic intermediate dihydroxyacetone phosphate (DHAP) to sn-glycerol 3-phosphate (G3P), the key precursor for phospholipid synthesis. This is Glycerol-3-phosphate dehydrogenase [NAD(P)+] from Streptococcus uberis (strain ATCC BAA-854 / 0140J).